Consider the following 469-residue polypeptide: Argininosuccinate lyase (469 aa).

This sequence belongs to the lyase 1 family. Argininosuccinate lyase subfamily.

It localises to the cytoplasm. It carries out the reaction 2-(N(omega)-L-arginino)succinate = fumarate + L-arginine. Its pathway is amino-acid biosynthesis; L-arginine biosynthesis; L-arginine from L-ornithine and carbamoyl phosphate: step 3/3. This Mycolicibacterium smegmatis (strain ATCC 700084 / mc(2)155) (Mycobacterium smegmatis) protein is Argininosuccinate lyase.